A 142-amino-acid polypeptide reads, in one-letter code: Large ribosomal subunit protein uL11 (142 aa).

The protein belongs to the universal ribosomal protein uL11 family. In terms of assembly, part of the ribosomal stalk of the 50S ribosomal subunit. Interacts with L10 and the large rRNA to form the base of the stalk. L10 forms an elongated spine to which L12 dimers bind in a sequential fashion forming a multimeric L10(L12)X complex. One or more lysine residues are methylated.

Functionally, forms part of the ribosomal stalk which helps the ribosome interact with GTP-bound translation factors. The polypeptide is Large ribosomal subunit protein uL11 (Klebsiella pneumoniae (strain 342)).